A 312-amino-acid chain; its full sequence is Very-long-chain 3-oxoacyl-CoA reductase (312 aa).

The chain crosses the membrane as a helical span at residues 4-24; that stretch reads APPAAGFLYWVGASTIAYLAL. 50 to 79 provides a ligand contact to NADP(+); it reads GEWAVVTGGTDGIGKAYAEELAKRGMKIVL. A run of 2 helical transmembrane segments spans residues 182–202 and 269–285; these read GVIL…LTIY and TTGY…NSIM. Residue Ser189 coordinates substrate. Catalysis depends on Tyr202, which acts as the Proton acceptor. The short motif at 308–312 is the Di-lysine motif element; sequence KRKKN.

It belongs to the short-chain dehydrogenases/reductases (SDR) family. 17-beta-HSD 3 subfamily. As to expression, expressed in most tissues tested.

The protein resides in the endoplasmic reticulum membrane. It carries out the reaction a very-long-chain (3R)-3-hydroxyacyl-CoA + NADP(+) = a very-long-chain 3-oxoacyl-CoA + NADPH + H(+). The enzyme catalyses 17beta-estradiol + NAD(+) = estrone + NADH + H(+). It catalyses the reaction 17beta-estradiol + NADP(+) = estrone + NADPH + H(+). The catalysed reaction is 3-oxooctadecanoyl-CoA + NADPH + H(+) = (3R)-hydroxyoctadecanoyl-CoA + NADP(+). It carries out the reaction (7Z,10Z,13Z,16Z)-3-oxodocosatetraenoyl-CoA + NADPH + H(+) = (3R)-hydroxy-(7Z,10Z,13Z,16Z)-docosatetraenoyl-CoA + NADP(+). The enzyme catalyses 3-oxo-(7Z,10Z,13Z,16Z,19Z)-docosapentaenoyl-CoA + NADPH + H(+) = (3R)-hydroxy-(7Z,10Z,13Z,16Z,19Z)-docosapentaenoyl-CoA + NADP(+). It catalyses the reaction (8Z,11Z,14Z)-3-oxoeicosatrienoyl-CoA + NADPH + H(+) = (3R)-hydroxy-(8Z,11Z,14Z)-eicosatrienoyl-CoA + NADP(+). It functions in the pathway lipid metabolism; fatty acid biosynthesis. Its pathway is steroid biosynthesis; estrogen biosynthesis. Its function is as follows. Catalyzes the second of the four reactions of the long-chain fatty acids elongation cycle. This endoplasmic reticulum-bound enzymatic process, allows the addition of two carbons to the chain of long- and very long-chain fatty acids/VLCFAs per cycle. This enzyme has a 3-ketoacyl-CoA reductase activity, reducing 3-ketoacyl-CoA to 3-hydroxyacyl-CoA, within each cycle of fatty acid elongation. Thereby, it may participate in the production of VLCFAs of different chain lengths that are involved in multiple biological processes as precursors of membrane lipids and lipid mediators. May also catalyze the transformation of estrone (E1) into estradiol (E2) and play a role in estrogen formation. This is Very-long-chain 3-oxoacyl-CoA reductase from Mus musculus (Mouse).